The chain runs to 277 residues: MIOREX complex component 2 (277 aa).

The protein belongs to the NAD(P)-dependent epimerase/dehydratase family. Associates with the mitochondrial ribosome. Component of a multi-subunit COQ enzyme complex.

The protein localises to the mitochondrion. Its pathway is cofactor biosynthesis; ubiquinone biosynthesis. Component of MIOREX complexes, large expressome-like assemblies of ribosomes with factors involved in all the steps of post-transcriptional gene expression. Component of a multi-subunit COQ enzyme complex required for coenzyme Q biosynthesis. The polypeptide is MIOREX complex component 2 (Saccharomyces cerevisiae (strain ATCC 204508 / S288c) (Baker's yeast)).